The following is a 420-amino-acid chain: CinA-like protein (420 aa).

Belongs to the CinA family.

This chain is CinA-like protein, found in Chloroherpeton thalassium (strain ATCC 35110 / GB-78).